The primary structure comprises 570 residues: Sulfite reductase [NADPH] hemoprotein beta-component (570 aa).

Residues Cys-434, Cys-440, Cys-479, and Cys-483 each contribute to the [4Fe-4S] cluster site. Cys-483 lines the siroheme pocket.

This sequence belongs to the nitrite and sulfite reductase 4Fe-4S domain family. As to quaternary structure, alpha(8)-beta(8). The alpha component is a flavoprotein, the beta component is a hemoprotein. It depends on siroheme as a cofactor. The cofactor is [4Fe-4S] cluster.

It catalyses the reaction hydrogen sulfide + 3 NADP(+) + 3 H2O = sulfite + 3 NADPH + 4 H(+). The protein operates within sulfur metabolism; hydrogen sulfide biosynthesis; hydrogen sulfide from sulfite (NADPH route): step 1/1. Functionally, component of the sulfite reductase complex that catalyzes the 6-electron reduction of sulfite to sulfide. This is one of several activities required for the biosynthesis of L-cysteine from sulfate. In Shigella flexneri, this protein is Sulfite reductase [NADPH] hemoprotein beta-component.